Here is a 349-residue protein sequence, read N- to C-terminus: ATPase GET3 (349 aa).

Lys26–Thr33 is an ATP binding site. The active site involves Asp57. 2 residues coordinate ATP: Glu242 and Asn269. Residues Cys281 and Cys284 each coordinate Zn(2+).

It belongs to the arsA ATPase family. Homodimer. Component of the Golgi to ER traffic (GET) complex, which is composed of GET1, GET2 and GET3. Within the complex, GET1 and GET2 form a heterotetramer which is stabilized by phosphatidylinositol binding and which binds to the GET3 homodimer. Interacts with the chloride channel protein GEF1.

Its subcellular location is the cytoplasm. The protein resides in the endoplasmic reticulum. It localises to the golgi apparatus. Its function is as follows. ATPase required for the post-translational delivery of tail-anchored (TA) proteins to the endoplasmic reticulum. Recognizes and selectively binds the transmembrane domain of TA proteins in the cytosol. This complex then targets to the endoplasmic reticulum by membrane-bound receptors GET1 and GET2, where the tail-anchored protein is released for insertion. This process is regulated by ATP binding and hydrolysis. ATP binding drives the homodimer towards the closed dimer state, facilitating recognition of newly synthesized TA membrane proteins. ATP hydrolysis is required for insertion. Subsequently, the homodimer reverts towards the open dimer state, lowering its affinity for the GET1-GET2 receptor, and returning it to the cytosol to initiate a new round of targeting. Cooperates with the HDEL receptor ERD2 to mediate the ATP-dependent retrieval of resident ER proteins that contain a C-terminal H-D-E-L retention signal from the Golgi to the ER. Involved in low-level resistance to the oxyanions arsenite and arsenate, and in heat tolerance. The protein is ATPase GET3 of Lodderomyces elongisporus (strain ATCC 11503 / CBS 2605 / JCM 1781 / NBRC 1676 / NRRL YB-4239) (Yeast).